Consider the following 256-residue polypeptide: Complex I assembly factor TIMMDC1, mitochondrial (256 aa).

The disordered stretch occupies residues 1-27 (MAQSDPPKSPDPPLPTSIRNPQTPESG). 2 helical membrane-spanning segments follow: residues 111–131 (WGWRVAAFVTIFNSVSTGLTV) and 159–179 (VGLLSGSLIGAALGVPAGALI).

The protein belongs to the Tim17/Tim22/Tim23 family. In terms of assembly, associates with the intermediate 315 kDa subcomplex of incompletely assembled complex I.

It localises to the mitochondrion membrane. Its function is as follows. Chaperone protein involved in the assembly of the mitochondrial NADH:ubiquinone oxidoreductase complex (complex I). Participates in constructing the membrane arm of complex I. The protein is Complex I assembly factor TIMMDC1, mitochondrial (timmdc1) of Xenopus laevis (African clawed frog).